Consider the following 640-residue polypeptide: 1-deoxy-D-xylulose-5-phosphate synthase (640 aa).

Thiamine diphosphate is bound by residues H78 and G119–S121. D151 serves as a coordination point for Mg(2+). Thiamine diphosphate-binding positions include G152–A153, N180, Y289, and E371. Residue N180 coordinates Mg(2+).

The protein belongs to the transketolase family. DXPS subfamily. Homodimer. The cofactor is Mg(2+). Thiamine diphosphate is required as a cofactor.

It carries out the reaction D-glyceraldehyde 3-phosphate + pyruvate + H(+) = 1-deoxy-D-xylulose 5-phosphate + CO2. It participates in metabolic intermediate biosynthesis; 1-deoxy-D-xylulose 5-phosphate biosynthesis; 1-deoxy-D-xylulose 5-phosphate from D-glyceraldehyde 3-phosphate and pyruvate: step 1/1. In terms of biological role, catalyzes the acyloin condensation reaction between C atoms 2 and 3 of pyruvate and glyceraldehyde 3-phosphate to yield 1-deoxy-D-xylulose-5-phosphate (DXP). This Bartonella henselae (strain ATCC 49882 / DSM 28221 / CCUG 30454 / Houston 1) (Rochalimaea henselae) protein is 1-deoxy-D-xylulose-5-phosphate synthase.